A 228-amino-acid polypeptide reads, in one-letter code: Ribose-5-phosphate isomerase A (228 aa).

Substrate-binding positions include 32–35 (TGST), 85–88 (DGAD), and 98–101 (KGGG). The active-site Proton acceptor is E107. K125 lines the substrate pocket.

This sequence belongs to the ribose 5-phosphate isomerase family. In terms of assembly, homodimer.

The catalysed reaction is aldehydo-D-ribose 5-phosphate = D-ribulose 5-phosphate. The protein operates within carbohydrate degradation; pentose phosphate pathway; D-ribose 5-phosphate from D-ribulose 5-phosphate (non-oxidative stage): step 1/1. Its function is as follows. Catalyzes the reversible conversion of ribose-5-phosphate to ribulose 5-phosphate. This chain is Ribose-5-phosphate isomerase A, found in Cupriavidus taiwanensis (strain DSM 17343 / BCRC 17206 / CCUG 44338 / CIP 107171 / LMG 19424 / R1) (Ralstonia taiwanensis (strain LMG 19424)).